Consider the following 735-residue polypeptide: Probable ATP-dependent RNA helicase DHR2 (735 aa).

Residues 1–13 (MAANSNSRVASNH) show a composition bias toward polar residues. The tract at residues 1 to 29 (MAANSNSRVASNHTSKKQKVRRNIHPFTN) is disordered. Basic residues predominate over residues 14-24 (TSKKQKVRRNI). A Helicase ATP-binding domain is found at 91-257 (MSYIESNPVT…FNNAPILFVE (167 aa)). An ATP-binding site is contributed by 104–111 (GETGSGKS). Residues 203–206 (DEAH) carry the DEAH box motif. In terms of domain architecture, Helicase C-terminal spans 262-456 (DVKQYYLKAP…SPVLMLKRYG (195 aa)).

The protein belongs to the DEAD box helicase family. DEAH subfamily. Interacts with NOP19. Interacts with UBP10.

Its subcellular location is the nucleus. The protein localises to the nucleolus. The enzyme catalyses ATP + H2O = ADP + phosphate + H(+). Its function is as follows. Probable ATP-binding RNA helicase. Required for 18S rRNA synthesis. The polypeptide is Probable ATP-dependent RNA helicase DHR2 (DHR2) (Saccharomyces cerevisiae (strain ATCC 204508 / S288c) (Baker's yeast)).